We begin with the raw amino-acid sequence, 271 residues long: Ribosomal RNA small subunit methyltransferase A (271 aa).

6 residues coordinate S-adenosyl-L-methionine: N18, L20, G45, E66, D91, and N112.

Belongs to the class I-like SAM-binding methyltransferase superfamily. rRNA adenine N(6)-methyltransferase family. RsmA subfamily.

Its subcellular location is the cytoplasm. It carries out the reaction adenosine(1518)/adenosine(1519) in 16S rRNA + 4 S-adenosyl-L-methionine = N(6)-dimethyladenosine(1518)/N(6)-dimethyladenosine(1519) in 16S rRNA + 4 S-adenosyl-L-homocysteine + 4 H(+). In terms of biological role, specifically dimethylates two adjacent adenosines (A1518 and A1519) in the loop of a conserved hairpin near the 3'-end of 16S rRNA in the 30S particle. May play a critical role in biogenesis of 30S subunits. The chain is Ribosomal RNA small subunit methyltransferase A from Vibrio cholerae serotype O1 (strain ATCC 39315 / El Tor Inaba N16961).